A 249-amino-acid polypeptide reads, in one-letter code: Probable cobalt-factor III C(17)-methyltransferase (249 aa).

Belongs to the precorrin methyltransferase family.

It carries out the reaction Co(II)-factor III + S-adenosyl-L-methionine + H(+) = Co(II)-factor IV + S-adenosyl-L-homocysteine. It functions in the pathway cofactor biosynthesis; adenosylcobalamin biosynthesis; cob(II)yrinate a,c-diamide from sirohydrochlorin (anaerobic route): step 3/10. Methyltransferase that likely catalyzes the ring contraction and methylation of C-17 in cobalt-factor III to form cobalt-factor IV. May also convert cobalt-precorrin-3 to cobalt-precorrin-4. This Methanocaldococcus jannaschii (strain ATCC 43067 / DSM 2661 / JAL-1 / JCM 10045 / NBRC 100440) (Methanococcus jannaschii) protein is Probable cobalt-factor III C(17)-methyltransferase (cbiH).